A 200-amino-acid chain; its full sequence is Large ribosomal subunit protein uL4 (200 aa).

Positions 38-67 (GRQGSKAQKTRSEVSGGGKKPWRQKGTGRA) are disordered.

It belongs to the universal ribosomal protein uL4 family. Part of the 50S ribosomal subunit.

One of the primary rRNA binding proteins, this protein initially binds near the 5'-end of the 23S rRNA. It is important during the early stages of 50S assembly. It makes multiple contacts with different domains of the 23S rRNA in the assembled 50S subunit and ribosome. Its function is as follows. Forms part of the polypeptide exit tunnel. This Pseudomonas paraeruginosa (strain DSM 24068 / PA7) (Pseudomonas aeruginosa (strain PA7)) protein is Large ribosomal subunit protein uL4.